The sequence spans 111 residues: Propane 2-monooxygenase, effector component (111 aa).

The protein belongs to the TmoD/XamoD family. As to quaternary structure, the propane 2-monooxygenase multicomponent enzyme system is composed of an electron transfer component and a monooxygenase component interacting with the effector protein PrmD. The electron transfer component is composed of a reductase (PrmB), and the monooxygenase component is formed by a large subunit (PrmA) and a small subunit (PrmC).

Functionally, effector component of the propane 2-monooxygenase multicomponent enzyme system which is involved in the degradation of propane via the O2-dependent hydroxylation of propane. The chain is Propane 2-monooxygenase, effector component from Gordonia sp. (strain TY-5).